We begin with the raw amino-acid sequence, 93 residues long: UPF0358 protein BPUM_1375 (93 aa).

The protein belongs to the UPF0358 family.

The chain is UPF0358 protein BPUM_1375 from Bacillus pumilus (strain SAFR-032).